Reading from the N-terminus, the 570-residue chain is AT-rich interactive domain-containing protein 3A (570 aa).

Residues 102 to 215 (AGVPNSSSGH…LAPQAQSQHH (114 aa)) form a disordered region. The segment covering 120-160 (DIDDEDDEDDDPELDRGMDDEERDMDEDDSMNEGGGDEDLE) has biased composition (acidic residues). Position 179 is a phosphoserine (S179). The region spanning 232 to 324 (DEKRKEFLDD…YLYPYECEKR (93 aa)) is the ARID domain. S356 carries the phosphoserine modification. The REKLES domain occupies 429 to 523 (AALEQLREKL…GVLFARKPAI (95 aa)). Residues 430-473 (ALEQLREKLESGEPPEKKVMLMAEEQQRIMQHALQQNLFAMATQ) form an important for nuclear localization region. The tract at residues 475 to 495 (PMNIKLNNRDDRQETALNLST) is homodimerization. The tract at residues 519-531 (RKPAIGFMPSSQR) is important for cytoplasmic localization. The disordered stretch occupies residues 528–570 (SSQRVHHQHSSQGKSNSPGLSSHIQPSSSASSSASSHGPATSP). 2 positions are modified to phosphoserine: S542 and S569. Positions 548–570 (SSHIQPSSSASSSASSHGPATSP) are enriched in low complexity.

As to quaternary structure, homodimer.

It is found in the nucleus. Its subcellular location is the cytoplasm. Functionally, transcription factor. The chain is AT-rich interactive domain-containing protein 3A (arid3a) from Danio rerio (Zebrafish).